A 324-amino-acid polypeptide reads, in one-letter code: DNA repair and recombination protein RadA (324 aa).

Residue 107-114 coordinates ATP; that stretch reads GEFGSGKS.

It belongs to the eukaryotic RecA-like protein family.

In terms of biological role, involved in DNA repair and in homologous recombination. Binds and assemble on single-stranded DNA to form a nucleoprotein filament. Hydrolyzes ATP in a ssDNA-dependent manner and promotes DNA strand exchange between homologous DNA molecules. In Methanoculleus marisnigri (strain ATCC 35101 / DSM 1498 / JR1), this protein is DNA repair and recombination protein RadA.